The chain runs to 1971 residues: Germinal-center associated nuclear protein (1971 aa).

Disordered regions lie at residues 1–50 and 214–406; these read MHPV…KSLA and PAFA…RGKS. Polar residues predominate over residues 8–29; the sequence is GGQQPSAFAVSSSTTGTYQTKS. At Arg32 the chain carries Asymmetric dimethylarginine. Positions 33-335 are FG-repeats; sequence FGQPSLFGQN…RPRGGTLFGR (303 aa). Composition is skewed to polar residues over residues 38–50 and 214–224; these read LFGQNSTPSKSLA and PAFASPLSNQN. The segment covering 232-253 has biased composition (low complexity); the sequence is STSAFGSSNSSFSTFPTASPGS. Composition is skewed to basic and acidic residues over residues 288 to 321 and 342 to 359; these read RKEDQDRSPRRHCHEAAEDPDPLSRGDHPPDKRP and KSNKEAGRLGSKESKESG. A DNA primase region spans residues 414–550; the sequence is EEWIYSLGGV…AAGSLLSKSS (137 aa). At Ser424 the chain carries Phosphoserine. Lys483 and Lys484 each carry N6-acetyllysine. Ser502, Ser531, and Ser550 each carry phosphoserine. Positions 768 to 951 constitute a PCI domain; it reads NNENMTKCLQ…RKSVFIGRKL (184 aa). Residues 1124–1162 are a coiled coil; sequence HVAAEEVSMERQRLEEEKQRAEEERLKQERELMLTQLSE. A disordered region spans residues 1793 to 1840; sequence RELQLSHGRSGMRSIHPPTSTFPTPLLHVHQKGKKKEESGREGSLSTE.

This sequence belongs to the SAC3 family. In terms of assembly, component of the nuclear pore complex (NPC)-associated TREX-2 complex (transcription and export complex 2), composed of at least GANP, 2 copies of ENY2, PCID2, SEM1/DSS1, and either centrin CETN2 or centrin CETN3. The TREX-2 complex also associates with ALYREF/ALY. Interacts with RNA polymerase II subunit POLR2A and with the transcription elongation factor SUPT5H/SPT5. Interacts (via FG-repeats) with NXF1; this interaction is not mediated by RNA. Interacts with nuclear envelope proteins NUP62, NUP153 and RANBP2/NUP358; interaction with NUP153 is required for full localization at the nuclear pore complex. Interacts with several RNA helicases, including DHX9, DDX21, and DDX39A/DDX39, and with DNA topoisomerase TOP2A. Directly interacts with AICDA/AID. Interacts with the glucocorticoid receptor NR3C1. Interacts with MCM3. In terms of processing, phosphorylation at Ser-502 is induced in B-cells by CD40-stimulation, but not by bacterial lipopolysaccharide (LPS). Expressed at low levels in lymphoid organs, including thymus, spleen and lymph nodes. Up-regulated in stimulated B-cells in spleen and Peyer's patch germinal centers (at protein level).

Its subcellular location is the cytoplasm. The protein resides in the nucleus. The protein localises to the nucleus envelope. It is found in the nuclear pore complex. It localises to the nucleoplasm. Its subcellular location is the chromosome. It catalyses the reaction L-lysyl-[histone] + acetyl-CoA = N(6)-acetyl-L-lysyl-[histone] + CoA + H(+). Functionally, as a component of the TREX-2 complex, involved in the export of mRNAs to the cytoplasm through the nuclear pores. Through the acetylation of histones, affects the assembly of nucleosomes at immunoglobulin variable region genes and promotes the recruitment and positioning of transcription complex to favor DNA cytosine deaminase AICDA/AID targeting, hence promoting somatic hypermutations. The polypeptide is Germinal-center associated nuclear protein (Mcm3ap) (Mus musculus (Mouse)).